A 2533-amino-acid polypeptide reads, in one-letter code: Highly reducing polyketide synthase azaB (2533 aa).

In terms of domain architecture, Ketosynthase family 3 (KS3) spans 7–433; the sequence is TAPMAIIGMA…GSNAHAILES (427 aa). Active-site for beta-ketoacyl synthase activity residues include cysteine 180, histidine 315, and histidine 355. Residues 554–821 form a malonyl-CoA:ACP transacylase (MAT) domain region; sequence WVFTGQGAQW…VEFESSFRHM (268 aa). The tract at residues 946–1081 is N-terminal hotdog fold; the sequence is SDLVGYSQPS…GRISVITTSD (136 aa). The 309-residue stretch at 946 to 1254 folds into the PKS/mFAS DH domain; that stretch reads SDLVGYSQPS…CQSLGRALDR (309 aa). Residues 947-1251 are dehydratase (DH) domain; that stretch reads DLVGYSQPSI…GLTCQSLGRA (305 aa). Histidine 978 (proton acceptor; for dehydratase activity) is an active-site residue. The tract at residues 1097–1254 is C-terminal hotdog fold; that stretch reads YNRRIDPRYM…CQSLGRALDR (158 aa). Catalysis depends on aspartate 1163, which acts as the Proton donor; for dehydratase activity. The methyltransferase (CMet) domain stretch occupies residues 1419–1554; that stretch reads TRQVSELVRL…GGKLILMETT (136 aa). The tract at residues 1839 to 2155 is enoyl reductase (ER) domain; the sequence is GLIDTLVFHD…TGQHMGKIII (317 aa). A ketoreductase (KR) domain region spans residues 2178-2349; that stretch reads ASYVIVGGLG…AVSLDLGIVR (172 aa). The Carrier domain occupies 2455-2532; the sequence is DAAALICQEL…DLSLRVATKR (78 aa). An O-(pantetheine 4'-phosphoryl)serine modification is found at serine 2492.

It participates in secondary metabolite biosynthesis. Functionally, highly reducing polyketide synthase; part of the gene cluster that mediates the biosynthesis of azaphilones, a class of fungal metabolites characterized by a highly oxygenated pyrano-quinone bicyclic core and exhibiting a broad range of bioactivities. In the first step, the non-reducing polyketide synthase azaA forms the hexaketide precursor from successive condensations of five malonyl-CoA units, presumably with a simple acetyl-CoA starter unit. The reactive polyketide chain then undergoes a PT-mediated C2-C7 cyclization to afford the aromatic ring and is eventually released as an aldehyde through the R-domain. The putative ketoreductase azaE is proposed to catalyze the reduction of the terminal ketone resulting in the early culture product FK17-P2a. The monooxygenase azaH was demonstrated to be the only enzyme required to convert FK17-P2a to azanigerone E. AzaH first hydroxylates the benzaldehyde intermediate FK17-P2a at C4, which triggers the formation of the pyran-ring to afford azanigerone E. In parallel, the 2,4-dimethylhexanoyl chain is synthesized by the HR-PKS azaB and is proposed to be transferred to the C4-hydroxyl of azanigerone E by the acyltransferase azaD directly from the ACP domain of azaB. Alternatively, the 2,4-dimethyl-hexanoyl chain may be offloaded from the HR-PKS as a carboxylic acid and converted to an acyl-CoA by azaF. The resulting acyl-CoA molecule could then be taken up as a substrate by AzaD to form azanigerone B. To yield the carboxylic acid substituent in azanigerone A, the hydroxypropyl side chain of azanigerone B would need to undergo a C-C oxidative cleavage catalyzed by cytochrome P450 AzaI. AzaI is proposed to act on a vicinal diol that leads to a C-C bond scission either through an alkoxyradical intermediate or a peroxy complex. In the biosynthesis of azanigerone A, azanigerone B first undergoes hydroxylation at C10, possibly catalyzed by one of the two FAD-dependent monooxygenases encoded in the cluster, azaG or azaL, resulting in the vicinal diol azanigerone C. Oxidative cleavage of azanigerone C by azaI would yield the corresponding aldehyde derivative of azanigerone A. Finally, the dehydrogenase azaJ is proposed to convert the aldehyde functional group into the carboxylic acid, completing the conversion from azanigerone B to azanigerone A. Alternatively, the oxidation of aldehyde to carboxylic acid may be catalyzed by the same P450 enzyme azaI via consecutive oxidation or by endogenous alcohol dehydrogenase. The protein is Highly reducing polyketide synthase azaB of Aspergillus niger (strain ATCC 1015 / CBS 113.46 / FGSC A1144 / LSHB Ac4 / NCTC 3858a / NRRL 328 / USDA 3528.7).